Consider the following 58-residue polypeptide: uncharacterized protein (58 aa).

Residues 3-52 (KVILEHLQRIEKQLEILNSKIENFLGFEELSEEELKELDEIEAKMEKGEK) adopt a coiled-coil conformation.

This is an uncharacterized protein from Archaeoglobus fulgidus (strain ATCC 49558 / DSM 4304 / JCM 9628 / NBRC 100126 / VC-16).